Reading from the N-terminus, the 103-residue chain is Probable protease inhibitor Egf0.4a (103 aa).

Positions 1 to 22 (MMSEKFALVLLVACIAFIGIET) are cleaved as a signal peptide. Positions 35-87 (CGENEAYDSMRRGCEKRCDDHNPTFCFKFTTVCWCEKGYVRDKSDTCIKVEDC) constitute a TIL domain.

It belongs to the polydnaviridae EGF-like motif protein family.

The polypeptide is Probable protease inhibitor Egf0.4a (O4) (Microplitis demolitor (Parasitoid wasp)).